The primary structure comprises 85 residues: Putative membrane protein insertion efficiency factor (85 aa).

The protein belongs to the UPF0161 family.

The protein resides in the cell inner membrane. Functionally, could be involved in insertion of integral membrane proteins into the membrane. This Shewanella sediminis (strain HAW-EB3) protein is Putative membrane protein insertion efficiency factor.